The sequence spans 252 residues: Probable transcriptional regulatory protein Haur_3030 (252 aa).

It belongs to the TACO1 family.

The protein resides in the cytoplasm. The chain is Probable transcriptional regulatory protein Haur_3030 from Herpetosiphon aurantiacus (strain ATCC 23779 / DSM 785 / 114-95).